The primary structure comprises 431 residues: 5-methylthioadenosine/S-adenosylhomocysteine deaminase (431 aa).

Zn(2+)-binding residues include histidine 66 and histidine 68. 3 residues coordinate substrate: glutamate 95, arginine 147, and histidine 185. Histidine 212 lines the Zn(2+) pocket. Glutamate 215 and aspartate 300 together coordinate substrate. Aspartate 300 contributes to the Zn(2+) binding site.

The protein belongs to the metallo-dependent hydrolases superfamily. MTA/SAH deaminase family. The cofactor is Zn(2+).

It catalyses the reaction S-adenosyl-L-homocysteine + H2O + H(+) = S-inosyl-L-homocysteine + NH4(+). The catalysed reaction is S-methyl-5'-thioadenosine + H2O + H(+) = S-methyl-5'-thioinosine + NH4(+). In terms of biological role, catalyzes the deamination of 5-methylthioadenosine and S-adenosyl-L-homocysteine into 5-methylthioinosine and S-inosyl-L-homocysteine, respectively. Is also able to deaminate adenosine. The chain is 5-methylthioadenosine/S-adenosylhomocysteine deaminase from Desulfitobacterium hafniense (strain DSM 10664 / DCB-2).